Consider the following 742-residue polypeptide: 5-methyltetrahydropteroyltriglutamate--homocysteine methyltransferase (742 aa).

5-methyltetrahydropteroyltri-L-glutamate contacts are provided by residues 18-21 (REWK) and K112. L-homocysteine contacts are provided by residues 420 to 422 (IGS) and E473. L-methionine-binding positions include 420 to 422 (IGS) and E473. Residue W550 participates in 5-methyltetrahydropteroyltri-L-glutamate binding. L-homocysteine is bound at residue D588. L-methionine is bound at residue D588. 5-methyltetrahydropteroyltri-L-glutamate is bound at residue E594. Residues H630, C632, and E654 each coordinate Zn(2+). Catalysis depends on H683, which acts as the Proton donor. C715 serves as a coordination point for Zn(2+).

The protein belongs to the vitamin-B12 independent methionine synthase family. Zn(2+) is required as a cofactor.

It catalyses the reaction 5-methyltetrahydropteroyltri-L-glutamate + L-homocysteine = tetrahydropteroyltri-L-glutamate + L-methionine. Its pathway is amino-acid biosynthesis; L-methionine biosynthesis via de novo pathway; L-methionine from L-homocysteine (MetE route): step 1/1. In terms of biological role, catalyzes the transfer of a methyl group from 5-methyltetrahydrofolate to homocysteine resulting in methionine formation. This Staphylococcus aureus (strain Mu3 / ATCC 700698) protein is 5-methyltetrahydropteroyltriglutamate--homocysteine methyltransferase.